Consider the following 242-residue polypeptide: Large ribosomal subunit protein uL3 (242 aa).

The interval 131–165 (GRATHGNSVSHRTHGSTGQRQDPGKVFKGKKMAGH) is disordered. Polar residues predominate over residues 135-150 (HGNSVSHRTHGSTGQR). Position 151 is an N5-methylglutamine (Gln-151).

Belongs to the universal ribosomal protein uL3 family. In terms of assembly, part of the 50S ribosomal subunit. Forms a cluster with proteins L14 and L19. In terms of processing, methylated by PrmB.

Functionally, one of the primary rRNA binding proteins, it binds directly near the 3'-end of the 23S rRNA, where it nucleates assembly of the 50S subunit. The chain is Large ribosomal subunit protein uL3 from Chelativorans sp. (strain BNC1).